We begin with the raw amino-acid sequence, 196 residues long: Recombination protein RecR (196 aa).

A C4-type zinc finger spans residues 57 to 72; the sequence is CERCNTFTEAPVCSTC. The 96-residue stretch at 80–175 folds into the Toprim domain; it reads RQLCVVETPA…SVTRLARGVP (96 aa).

This sequence belongs to the RecR family.

May play a role in DNA repair. It seems to be involved in an RecBC-independent recombinational process of DNA repair. It may act with RecF and RecO. The sequence is that of Recombination protein RecR from Methylibium petroleiphilum (strain ATCC BAA-1232 / LMG 22953 / PM1).